The sequence spans 433 residues: 23S rRNA (uracil(1939)-C(5))-methyltransferase RlmD (433 aa).

Residues 10 to 68 (RTTTRQIITVSVNDLDSFGQGVARHNGKTLFIPGLLPQENAEVTVTEDKKQYARAKVVR) form the TRAM domain. Residues Cys81, Cys87, Cys90, and Cys162 each coordinate [4Fe-4S] cluster. Residues Gln265, Phe294, Asn299, Glu315, Asn342, and Asp363 each coordinate S-adenosyl-L-methionine. Catalysis depends on Cys389, which acts as the Nucleophile.

Belongs to the class I-like SAM-binding methyltransferase superfamily. RNA M5U methyltransferase family. RlmD subfamily.

The enzyme catalyses uridine(1939) in 23S rRNA + S-adenosyl-L-methionine = 5-methyluridine(1939) in 23S rRNA + S-adenosyl-L-homocysteine + H(+). Its function is as follows. Catalyzes the formation of 5-methyl-uridine at position 1939 (m5U1939) in 23S rRNA. This is 23S rRNA (uracil(1939)-C(5))-methyltransferase RlmD from Shigella sonnei (strain Ss046).